A 339-amino-acid polypeptide reads, in one-letter code: GATA transcription factor 5 (339 aa).

Disordered regions lie at residues 68 to 88, 126 to 145, 163 to 206, and 221 to 242; these read MVRVSSEEPNDDGDALRRSSD, EYSGPNLTGTPTEKPAWLTG, PVPA…PSSP, and ERPPFPKKHKKRSAESVFSGEL. A compositionally biased stretch (polar residues) spans 126–136; the sequence is EYSGPNLTGTP. A Nuclear localization signal motif is present at residues 167 to 174; sequence KARSKRNR. The span at 181–206 shows a compositional bias: low complexity; sequence SLGSSSSSGPSSSGSTSSSSSGPSSP. The segment at 245 to 299 adopts a GATA-type zinc-finger fold; the sequence is LQPQRKCSHCGVQKTPQWRAGPMGAKTLCNACGVRYKSGRLLPEYRPACSPTFSS. The disordered stretch occupies residues 314-339; sequence RKKEPTSDNETGLNQLVQSPQAVPSF. The segment covering 321 to 339 has biased composition (polar residues); the sequence is DNETGLNQLVQSPQAVPSF.

It belongs to the type IV zinc-finger family. Class A subfamily.

Its subcellular location is the nucleus. Transcriptional activator that specifically binds 5'-GATA-3' or 5'-GAT-3' motifs within gene promoters. May be involved in the regulation of some light-responsive genes. The chain is GATA transcription factor 5 (GATA5) from Arabidopsis thaliana (Mouse-ear cress).